We begin with the raw amino-acid sequence, 337 residues long: Tryptophan--tRNA ligase (337 aa).

ATP contacts are provided by residues 12-14 (QPS) and 21-22 (GN). Residues 13–22 (PSADSLHLGN) carry the 'HIGH' region motif. Asp-138 contributes to the L-tryptophan binding site. ATP-binding positions include 150–152 (GDD), Ile-189, and 198–202 (KMSKS). The 'KMSKS' region signature appears at 198–202 (KMSKS).

Belongs to the class-I aminoacyl-tRNA synthetase family. In terms of assembly, homodimer.

The protein localises to the cytoplasm. It carries out the reaction tRNA(Trp) + L-tryptophan + ATP = L-tryptophyl-tRNA(Trp) + AMP + diphosphate + H(+). Catalyzes the attachment of tryptophan to tRNA(Trp). This Leifsonia xyli subsp. xyli (strain CTCB07) protein is Tryptophan--tRNA ligase.